The sequence spans 267 residues: Undecaprenyl-diphosphatase (267 aa).

A run of 8 helical transmembrane segments spans residues 1-21, 39-59, 83-103, 111-131, 144-164, 189-209, 218-238, and 246-266; these read MSYFEAFMLALVQGFTEFLPI, QGLAFDVAVHVGTLAAVVIYF, AKLAWMIILATIPACIFGLLM, LRSAWVIATTTIIFGLLLWWV, AGWKKALFIGLAQAMAIIPGT, FLMSIPIITLAGGYLGLKLVT, TLLTGIVVSFISAYICIHFFL, and MTPFVIYRLILGFGLFAFLMM.

Belongs to the UppP family.

It localises to the cell inner membrane. It catalyses the reaction di-trans,octa-cis-undecaprenyl diphosphate + H2O = di-trans,octa-cis-undecaprenyl phosphate + phosphate + H(+). Functionally, catalyzes the dephosphorylation of undecaprenyl diphosphate (UPP). Confers resistance to bacitracin. This Vibrio atlanticus (strain LGP32) (Vibrio splendidus (strain Mel32)) protein is Undecaprenyl-diphosphatase.